A 57-amino-acid polypeptide reads, in one-letter code: Cytochrome b-c1 complex subunit 10, mitochondrial (57 aa).

Over 1-23 (MAGTSGLLNAVKPKIQTIDIQAA) the chain is Mitochondrial matrix. Residues 24 to 44 (AGWGIAAAAGAIWVVQPFGWI) form a helical membrane-spanning segment. At 45-57 (KKTFIDPPPTEEK) the chain is on the mitochondrial intermembrane side.

It belongs to the UQCR11/QCR10 family. Component of the ubiquinol-cytochrome c oxidoreductase (cytochrome b-c1 complex, complex III, CIII), a multisubunit enzyme composed of 10 subunits. The complex is composed of 3 respiratory subunits cytochrome b (MT-CYB), cytochrome c1 (CYC1-1 or CYC1-2) and Rieske protein (UCR1-1 or UCR1-2), 2 core protein subunits MPPalpha1 (or MPPalpha2) and MPPB, and 5 low-molecular weight protein subunits QCR7-1 (or QCR7-2), UCRQ-1 (or UCRQ-2), QCR9, UCRY and probably QCR6-1 (or QCR6-2). The complex exists as an obligatory dimer and forms supercomplexes (SCs) in the inner mitochondrial membrane with NADH-ubiquinone oxidoreductase (complex I, CI), resulting in different assemblies (supercomplexes SCI(1)III(2) and SCI(2)III(4)).

The protein resides in the mitochondrion inner membrane. Component of the ubiquinol-cytochrome c oxidoreductase, a multisubunit transmembrane complex that is part of the mitochondrial electron transport chain which drives oxidative phosphorylation. The respiratory chain contains 3 multisubunit complexes succinate dehydrogenase (complex II, CII), ubiquinol-cytochrome c oxidoreductase (cytochrome b-c1 complex, complex III, CIII) and cytochrome c oxidase (complex IV, CIV), that cooperate to transfer electrons derived from NADH and succinate to molecular oxygen, creating an electrochemical gradient over the inner membrane that drives transmembrane transport and the ATP synthase. The cytochrome b-c1 complex catalyzes electron transfer from ubiquinol to cytochrome c, linking this redox reaction to translocation of protons across the mitochondrial inner membrane, with protons being carried across the membrane as hydrogens on the quinol. In the process called Q cycle, 2 protons are consumed from the matrix, 4 protons are released into the intermembrane space and 2 electrons are passed to cytochrome c. The polypeptide is Cytochrome b-c1 complex subunit 10, mitochondrial (UCRY) (Arabidopsis thaliana (Mouse-ear cress)).